The following is a 462-amino-acid chain: MSSVKRTPKQEIVTQFHCSAAEGDIAKLTGILSHSPSLLNETSENGWTALMYAARNGHPEIVQFLLEKGCDRSIVNKSRQTALDIAVFWGYKHIANLLATAKGGKKPWFLTNEVEECENYFSKTLLDRKSEKRNNSDWLLAKESHPATVFILFSNLNPLVTLGGNKESFQQPEVRLCQLNYTDIKDYLAQPEKITLIFLGVELEIKDKLFNYAGEVPREEEDGLVAWFALGIDPIAAEEFKQRHENCYFLHPPMPALLQLKEKEAGVVAQARSVLAWYSRYKFCPTCGNATKIEEGGYKRVCLKEDCPSLNGVHNTSYPRVDPVVIMQVIHPDGTKCLLGRQKRFPPGMFTCLAGFIEPGETIEDAVRREVEEESGVKVGHVQYVACQPWPMPSSLMIGCLALAVSTEIKVDKNEIEDAHWFTREQVLDVLTKGKQQAFFVPPSRAIAHQLIKHWIRINPNL.

ANK repeat units lie at residues 11–40 (EIVT…SLLN), 45–74 (NGWT…DRSI), and 78–98 (SRQT…ANLL). K185 is subject to N6-succinyllysine. Residues C284 and C287 each coordinate Zn(2+). K292 carries the post-translational modification N6-succinyllysine. Residues C302 and C307 each contribute to the Zn(2+) site. Substrate is bound by residues Y318, 354-356 (AGF), E370, E374, and E415. Residues 319–453 (PRVDPVVIMQ…SRAIAHQLIK (135 aa)) form the Nudix hydrolase domain. A354, E370, E374, and E415 together coordinate Mg(2+). The Nudix box signature appears at 355–376 (GFIEPGETIEDAVRREVEEESG). Positions 460 to 462 (PNL) match the Microbody targeting signal motif.

The protein belongs to the Nudix hydrolase family. NudC subfamily. In terms of assembly, homodimer. Homodimerization is essential for its catalytic activity and protein stability. Interacts (via ANK repeats) with BLMH. It depends on Mg(2+) as a cofactor. Zn(2+) is required as a cofactor.

It localises to the cytoplasm. Its subcellular location is the peroxisome. It is found in the cytoplasmic granule. It catalyses the reaction a 5'-end NAD(+)-phospho-ribonucleoside in mRNA + H2O = a 5'-end phospho-adenosine-phospho-ribonucleoside in mRNA + beta-nicotinamide D-ribonucleotide + 2 H(+). The catalysed reaction is NAD(+) + H2O = beta-nicotinamide D-ribonucleotide + AMP + 2 H(+). The enzyme catalyses NADH + H2O = reduced beta-nicotinamide D-ribonucleotide + AMP + 2 H(+). It carries out the reaction NADPH + H2O = reduced beta-nicotinamide D-ribonucleotide + adenosine 2',5'-bisphosphate + 2 H(+). In terms of biological role, mRNA decapping enzyme that specifically removes the nicotinamide adenine dinucleotide (NAD) cap from a subset of mRNAs by hydrolyzing the diphosphate linkage to produce nicotinamide mononucleotide (NMN) and 5' monophosphate mRNA. The NAD-cap is present at the 5'-end of some RNAs; in contrast to the canonical N7 methylguanosine (m7G) cap, the NAD cap promotes mRNA decay. Preferentially acts on NAD-capped transcripts in response to nutrient stress. Also acts on free nicotinamide adenine dinucleotide molecules: hydrolyzes NAD(H) into NMN(H) and AMP, and NADPH into NMNH and 2',5'-ADP. May act to regulate the concentration of peroxisomal nicotinamide nucleotide cofactors required for oxidative metabolism in this organelle. Regulates the levels of circadian clock components PER1, PER2, PER3 and CRY2 in the liver. In Pongo abelii (Sumatran orangutan), this protein is NAD-capped RNA hydrolase NUDT12.